The following is a 261-amino-acid chain: MKSIKRIGLCISLLILIIFVTSCDGDNKIIGDSKEEQIKKSFAKTLDIYPIKNLEDLYDKEGYRDGEFKKDDKGTWLIRSEMKIQLKGENLESRGAVLEINRNTRTAKGHYIVREVVEDSDGMTHNHTKRYPVKMENNKMIPLKPIDDEKVKKEIEEFNFFVQYGNFKELENYKEDEVSYNPEVPIYSAKYQLKNSDYNVEQLRKRYNIPTQKAPKLLLKGSGNLKGSSVGYKNIEFTFIENKEENIYFTDSIYFNPSEDK.

The first 22 residues, 1–22 (MKSIKRIGLCISLLILIIFVTS), serve as a signal peptide directing secretion. Cysteine 23 is lipidated: N-palmitoyl cysteine. A lipid anchor (S-diacylglycerol cysteine) is attached at cysteine 23.

Belongs to the staphylococcal tandem lipoprotein family.

The protein localises to the cell membrane. This is an uncharacterized protein from Staphylococcus aureus (strain USA300).